Reading from the N-terminus, the 509-residue chain is Dihydrolipoyl dehydrogenase, mitochondrial (509 aa).

A mitochondrion-targeting transit peptide spans 1–35 (MQSWSRVYCSLAKRGHFNRISHGLQGLSAVPLRTY). Lysine 66 carries the post-translational modification N6-acetyllysine; alternate. Residue lysine 66 is modified to N6-succinyllysine; alternate. FAD-binding positions include 71 to 80 (EKNETLGGTC) and lysine 89. Residues cysteine 80 and cysteine 85 are joined by a disulfide bond. Residues lysine 104, lysine 122, lysine 132, and lysine 143 each carry the N6-acetyllysine; alternate modification. An N6-succinyllysine; alternate mark is found at lysine 104, lysine 122, lysine 132, and lysine 143. Residue glycine 154 coordinates FAD. Residues lysine 159 and lysine 166 each carry the N6-succinyllysine modification. 183–185 (TGS) is an FAD binding site. Residues 220–227 (GAGVIGVE) and glutamate 243 each bind NAD(+). An N6-succinyllysine mark is found at lysine 273 and lysine 277. Valine 278 is an NAD(+) binding site. Phosphoserine is present on residues serine 285 and serine 297. Glycine 314 lines the NAD(+) pocket. The residue at position 346 (lysine 346) is an N6-acetyllysine. Residues aspartate 355 and 361-364 (MLAH) contribute to the FAD site. Lysine 410 is subject to N6-acetyllysine; alternate. Lysine 410 bears the N6-succinyllysine; alternate mark. 2 positions are modified to N6-acetyllysine: lysine 417 and lysine 420. Residue lysine 430 is modified to N6-succinyllysine. Histidine 487 acts as the Proton acceptor in catalysis. At serine 502 the chain carries Phosphoserine. An N6-acetyllysine; alternate modification is found at lysine 505. Position 505 is an N6-succinyllysine; alternate (lysine 505).

This sequence belongs to the class-I pyridine nucleotide-disulfide oxidoreductase family. In terms of assembly, homodimer. Part of the multimeric pyruvate dehydrogenase complex that contains multiple copies of pyruvate dehydrogenase (subunits PDHA (PDHA1 or PDHA2) and PDHB, E1), dihydrolipoamide acetyltransferase (DLAT, E2) and lipoamide dehydrogenase (DLD, E3). These subunits are bound to an inner core composed of about 48 DLAT and 12 PDHX molecules (by non covalent bonds). The 2-oxoglutarate dehydrogenase complex is composed of OGDH (2-oxoglutarate dehydrogenase; E1), DLST (dihydrolipoamide succinyltransferase; E2), DLD (dihydrolipoamide dehydrogenase; E3) and the assembly factor KGD4. It contains multiple copies of the three enzymatic components (E1, E2 and E3). In the nucleus, the 2-oxoglutarate dehydrogenase complex associates with KAT2A. Interacts with PDHX. FAD serves as cofactor. Post-translationally, tyrosine phosphorylated.

The protein localises to the mitochondrion matrix. The protein resides in the nucleus. It localises to the cell projection. It is found in the cilium. Its subcellular location is the flagellum. The protein localises to the cytoplasmic vesicle. The protein resides in the secretory vesicle. It localises to the acrosome. It catalyses the reaction N(6)-[(R)-dihydrolipoyl]-L-lysyl-[protein] + NAD(+) = N(6)-[(R)-lipoyl]-L-lysyl-[protein] + NADH + H(+). Its activity is regulated as follows. Disruption of native heterodimer state inhibits primary dihydrolipoamide dehydrogenase activity and induces serine protease activity. Its function is as follows. Lipoamide dehydrogenase is a component of the glycine cleavage system as well as an E3 component of three alpha-ketoacid dehydrogenase complexes (pyruvate-, alpha-ketoglutarate-, and branched-chain amino acid-dehydrogenase complex). The 2-oxoglutarate dehydrogenase complex is mainly active in the mitochondrion. A fraction of the 2-oxoglutarate dehydrogenase complex also localizes in the nucleus and is required for lysine succinylation of histones: associates with KAT2A on chromatin and provides succinyl-CoA to histone succinyltransferase KAT2A. In monomeric form may have additional moonlighting function as serine protease. Involved in the hyperactivation of spermatazoa during capacitation and in the spermatazoal acrosome reaction. In Homo sapiens (Human), this protein is Dihydrolipoyl dehydrogenase, mitochondrial (DLD).